We begin with the raw amino-acid sequence, 208 residues long: Small ribosomal subunit protein uS4 (208 aa).

The S4 RNA-binding domain occupies 98-159 (RRLDNVAYRL…KSRKVAAISE (62 aa)).

It belongs to the universal ribosomal protein uS4 family. As to quaternary structure, part of the 30S ribosomal subunit. Contacts protein S5. The interaction surface between S4 and S5 is involved in control of translational fidelity.

Functionally, one of the primary rRNA binding proteins, it binds directly to 16S rRNA where it nucleates assembly of the body of the 30S subunit. Its function is as follows. With S5 and S12 plays an important role in translational accuracy. This chain is Small ribosomal subunit protein uS4, found in Citrifermentans bemidjiense (strain ATCC BAA-1014 / DSM 16622 / JCM 12645 / Bem) (Geobacter bemidjiensis).